We begin with the raw amino-acid sequence, 228 residues long: MKHLKAFDEAQNDIKAVQKRLSTSSTILSGIQKNMAHLNLLQIGVLSLIAVGSVFAGNPCLKGPPVPKNAAECCVTPFLVEPSAFMTCHSKWIGQTKRQMAMEGIPRGCCVAECVMNSTSLYSNGKIDREALTKLYLASTKSMAPEWNKITLDAIDGCFKMADTIKDEIEAGAKLTPAFEGEQICHPISGTILACMGMTLFAECPAKLFTVNDDCNKLKSYHSKCPFL.

Intrachain disulfides connect cysteine 60/cysteine 225, cysteine 73/cysteine 215, cysteine 74/cysteine 204, cysteine 88/cysteine 114, cysteine 110/cysteine 185, and cysteine 158/cysteine 195. Asparagine 117 carries N-linked (GlcNAc...) asparagine glycosylation.

It belongs to the PBP/GOBP family. Post-translationally, glycosylated. Head without antennae (at protein level).

The protein localises to the secreted. Present in the aqueous fluid surrounding olfactory sensory dendrites and are thought to aid in the capture and transport of hydrophobic odorants into and through this fluid. Binds N-phenyl-1-naphthylamine, menthol, citronellal, 1-dodecanol, decanal, p-tert-butylbenzophenone, 4-hydroxy-4'-isopropylazobenzene, 2-pyrrolyl-p-methyl-azobenzene and indole. Expressed in mosquito head but barely detectable in antennae, which suggests that it may be present in mouth structures, such as palpi and proboscis, and may have a function in taste. In Anopheles gambiae (African malaria mosquito), this protein is Odorant-binding protein 47.